Consider the following 65-residue polypeptide: Putative beta-neurotoxin RjAa8 (65 aa).

Positions 1–64 constitute an LCN-type CS-alpha/beta domain; it reads KEGYPMGRDG…VWDSSTNKCG (64 aa). Disulfide bonds link Cys11–Cys63, Cys15–Cys37, Cys22–Cys44, and Cys26–Cys46.

Belongs to the long (4 C-C) scorpion toxin superfamily. Sodium channel inhibitor family. Beta subfamily. In terms of tissue distribution, expressed by the venom gland.

The protein localises to the secreted. Functionally, beta toxins bind voltage-independently at site-4 of sodium channels (Nav) and shift the voltage of activation toward more negative potentials thereby affecting sodium channel activation and promoting spontaneous and repetitive firing. This chain is Putative beta-neurotoxin RjAa8, found in Rhopalurus junceus (Caribbean blue scorpion).